The sequence spans 194 residues: ATP-dependent Clp protease proteolytic subunit (194 aa).

Catalysis depends on Ser-97, which acts as the Nucleophile. His-122 is an active-site residue.

Belongs to the peptidase S14 family. In terms of assembly, fourteen ClpP subunits assemble into 2 heptameric rings which stack back to back to give a disk-like structure with a central cavity, resembling the structure of eukaryotic proteasomes.

The protein localises to the cytoplasm. The catalysed reaction is Hydrolysis of proteins to small peptides in the presence of ATP and magnesium. alpha-casein is the usual test substrate. In the absence of ATP, only oligopeptides shorter than five residues are hydrolyzed (such as succinyl-Leu-Tyr-|-NHMec, and Leu-Tyr-Leu-|-Tyr-Trp, in which cleavage of the -Tyr-|-Leu- and -Tyr-|-Trp bonds also occurs).. Cleaves peptides in various proteins in a process that requires ATP hydrolysis. Has a chymotrypsin-like activity. Plays a major role in the degradation of misfolded proteins. In Carsonella ruddii (strain PV), this protein is ATP-dependent Clp protease proteolytic subunit.